The primary structure comprises 213 residues: Outer envelope pore protein 24B, chloroplastic (213 aa).

Residues 1–3 lie on the Cytoplasmic side of the membrane; that stretch reads MAM. A beta stranded membrane pass occupies residues 4 to 13; that stretch reads KASIKGKYDT. Residues 14–18 are Chloroplast intermembrane-facing; it reads DKTSG. A beta stranded transmembrane segment spans residues 19–28; that stretch reads IGSLAFNAGD. The Cytoplasmic segment spans residues 29–32; that stretch reads IKLR. Residues 33-42 traverse the membrane as a beta stranded segment; sequence ATMTDATLVA. Topologically, residues 43 to 55 are chloroplast intermembrane; the sequence is GPTLTGLALAVEK. Residues 56 to 64 traverse the membrane as a beta stranded segment; that stretch reads PGSFIVEYN. Residues 65–70 lie on the Cytoplasmic side of the membrane; it reads VPKKDV. Residues 71–80 traverse the membrane as a beta stranded segment; it reads RFQFMNTVRI. Residues 81–93 are Chloroplast intermembrane-facing; it reads AEKPLNLTYIHSR. Residues 94 to 103 form a beta stranded membrane-spanning segment; the sequence is ADNRTIVDGS. Residues 104–108 are Cytoplasmic-facing; it reads LVIDS. The beta stranded transmembrane segment at 109 to 118 threads the bilayer; it reads ANKLSANHMV. The Chloroplast intermembrane segment spans residues 119–122; it reads GTNN. Residues 123–132 form a beta stranded membrane-spanning segment; sequence CKIKYTYAHG. Over 133 to 144 the chain is Cytoplasmic; sequence GLATFEPCYDLA. A beta stranded transmembrane segment spans residues 145 to 156; that stretch reads KNTWDFAVSRRF. Residues 157–159 lie on the Chloroplast intermembrane side of the membrane; that stretch reads YSG. Residues 160 to 168 traverse the membrane as a beta stranded segment; the sequence is DNVRATYQT. The Cytoplasmic segment spans residues 169–170; it reads SS. The beta stranded transmembrane segment at 171–179 threads the bilayer; sequence KLLGMEWSR. The Chloroplast intermembrane portion of the chain corresponds to 180 to 201; the sequence is NNKASGFKVCASVNLADELKTP. A beta stranded membrane pass occupies residues 202–211; that stretch reads KLTAETTWNL. The Cytoplasmic segment spans residues 212–213; that stretch reads EM.

Belongs to the plastid outer envelope porin OEP24 (TC 1.B.28) family. Homooligomers form large rather nonselective pores in plastidial outer membranes.

The protein resides in the plastid. It localises to the etioplast membrane. The protein localises to the chloroplast outer membrane. Functionally, high-conductance voltage-dependent solute channel with a slight selectivity for cations transporting triosephosphates, dicarboxylic acids, ATP, inorganic phosphate (Pi), sugars, and positively or negatively charged amino acids. The protein is Outer envelope pore protein 24B, chloroplastic (OEP24B) of Arabidopsis thaliana (Mouse-ear cress).